We begin with the raw amino-acid sequence, 170 residues long: Flavin reductase (NADPH) (170 aa).

This sequence belongs to the non-flavoprotein flavin reductase family.

The enzyme catalyses reduced riboflavin + NADP(+) = riboflavin + NADPH + 2 H(+). Catalyzes the NADH-dependent reduction of FAD to provide FADH2 for the halogenase RebH. The polypeptide is Flavin reductase (NADPH) (rbmH) (Lentzea aerocolonigenes (Lechevalieria aerocolonigenes)).